A 191-amino-acid chain; its full sequence is ECF RNA polymerase sigma factor ShbA (191 aa).

The segment at 27–98 is sigma-70 factor domain-2; sequence LLAHVHPLAL…HKVADLQRAA (72 aa). Residues 100–122 are disordered; the sequence is RHPGSTAVPSDEMPERPDDSLGP. The span at 112 to 122 shows a compositional bias: basic and acidic residues; that stretch reads MPERPDDSLGP. Residues 138–187 are sigma-70 factor domain-4; it reads LLANLPENQRELLVLRVAVGLTAEETGQMLGMSPGAVRVAQHRALSRLRA. The H-T-H motif DNA-binding region spans 160-179; sequence AEETGQMLGMSPGAVRVAQH.

The protein belongs to the sigma-70 factor family. ECF subfamily.

Functionally, sigma factors are initiation factors that promote the attachment of RNA polymerase to specific initiation sites and are then released. Extracytoplasmic function (ECF) sigma factors are held in an inactive form by an anti-sigma factor until released. This alternative sigma factor governs the transcription of the principal sigma factor HrdB (SigA) throughout growth. Acts by binding to the promoter region. This chain is ECF RNA polymerase sigma factor ShbA, found in Streptomyces griseus subsp. griseus (strain JCM 4626 / CBS 651.72 / NBRC 13350 / KCC S-0626 / ISP 5235).